Reading from the N-terminus, the 445-residue chain is Histidinol dehydrogenase (445 aa).

The NAD(+) site is built by tyrosine 138, glutamine 199, and asparagine 222. Serine 245, glutamine 267, and histidine 270 together coordinate substrate. Zn(2+)-binding residues include glutamine 267 and histidine 270. Catalysis depends on proton acceptor residues glutamate 335 and histidine 336. Substrate is bound by residues histidine 336, aspartate 369, glutamate 423, and histidine 428. Aspartate 369 lines the Zn(2+) pocket. Histidine 428 lines the Zn(2+) pocket.

The protein belongs to the histidinol dehydrogenase family. The cofactor is Zn(2+).

It catalyses the reaction L-histidinol + 2 NAD(+) + H2O = L-histidine + 2 NADH + 3 H(+). Its pathway is amino-acid biosynthesis; L-histidine biosynthesis; L-histidine from 5-phospho-alpha-D-ribose 1-diphosphate: step 9/9. Its function is as follows. Catalyzes the sequential NAD-dependent oxidations of L-histidinol to L-histidinaldehyde and then to L-histidine. This is Histidinol dehydrogenase from Burkholderia pseudomallei (strain 1710b).